The following is an 83-amino-acid chain: Weak toxin DE-1 (83 aa).

A signal peptide spans 1–21 (MKTLLLTLVVVTIVCLDLGYS). Intrachain disulfides connect C24/C45, C38/C62, C64/C75, and C76/C81.

Belongs to the three-finger toxin family. Short-chain subfamily. Type I alpha-neurotoxin sub-subfamily. Expressed by the venom gland.

It localises to the secreted. In Ophiophagus hannah (King cobra), this protein is Weak toxin DE-1.